A 2367-amino-acid polypeptide reads, in one-letter code: Probable G-protein coupled receptor 179 (2367 aa).

Positions 1-25 (MGTRGAVMPPPMWGLLGCCFVCAWA) are cleaved as a signal peptide. Over 26–381 (LGGPRPIRSL…CLVEEAAVLR (356 aa)) the chain is Extracellular. The tract at residues 62 to 245 (YLYSGDAQQL…CQEGRLRPGW (184 aa)) is cache-like region. The N-linked (GlcNAc...) asparagine glycan is linked to asparagine 75. Cysteine 76 and cysteine 236 form a disulfide bridge. Asparagine 298 is a glycosylation site (N-linked (GlcNAc...) asparagine). The chain crosses the membrane as a helical span at residues 382–402 (AAVLACQACCMLAIFLSMLVS). Over 403 to 415 (YRCRRNKRIWASG) the chain is Cytoplasmic. A helical transmembrane segment spans residues 416–436 (VVLLETVLFGFLLLYFPVFIL). The Extracellular segment spans residues 437-444 (YFKPSVFR). The helical transmembrane segment at 445–465 (CIALRWVRLLGFAIVYGTIIL) threads the bilayer. Residues cysteine 445 and cysteine 537 are joined by a disulfide bond. The Cytoplasmic portion of the chain corresponds to 466–493 (KLYRVLQLFLSRTAQRSALLSSGRLLRR). The helical transmembrane segment at 494-514 (LGLLLLPVLGFLAVWTVGALE) threads the bilayer. Residues 515–543 (RGIQHAPLVIRGHTPSGRHFYLCHHDRWD) lie on the Extracellular side of the membrane. A helical membrane pass occupies residues 544–564 (YIMVVAELLLLCWGSFLCYAT). Residues 565–575 (RAVLSAFHEPR) are Cytoplasmic-facing. A helical transmembrane segment spans residues 576 to 594 (YMGIALHNELLLSAAFHTA). The Extracellular segment spans residues 595 to 607 (RFVLVPSLHPDWT). The helical transmembrane segment at 608-628 (LLLFFFHTHSTVTTTLALIFI) threads the bilayer. Residues 629–2367 (PKFWKLGAPP…PPTVYPWDWE (1739 aa)) lie on the Cytoplasmic side of the membrane. Disordered stretches follow at residues 731–818 (ARQH…FRSA), 869–932 (REER…PHPP), 1039–1083 (KSRA…QQGS), 1098–1198 (RSTY…AGKT), 1247–1431 (EVTE…CPWE), 1537–1557 (PRES…SSKA), 1577–1672 (DLRP…ERPQ), 1723–1757 (AIRK…PTPE), 1823–1852 (SEGT…KGRL), 1886–2108 (AQAP…GSVE), 2133–2212 (WEAG…KEAG), and 2308–2367 (GVRE…WDWE). The span at 738–759 (SGSPGHGSLPGSSRRRLLSSSL) shows a compositional bias: low complexity. Positions 773–782 (STYDQRREQD) are enriched in basic and acidic residues. A compositionally biased stretch (basic and acidic residues) spans 1039–1067 (KSRAGENEMDAEDAHHQREANDVDEDRPK). Positions 1153 to 1164 (LQNQQNAHTSRM) are enriched in polar residues. Composition is skewed to basic and acidic residues over residues 1171 to 1181 (EGSREQEDRGR), 1277 to 1299 (RALR…KSEP), 1341 to 1362 (GRIR…EKPG), and 1390 to 1407 (EDGK…QEKQ). Basic and acidic residues predominate over residues 1615–1639 (ESQKDKEKMPGKSEIEDVTAWEKPE). Basic and acidic residues-rich tracts occupy residues 1840–1851 (AEQREKALEKGR), 1903–1920 (AEGH…RQDP), 1970–1979 (SHLDRQRPDQ), 2023–2054 (VTER…KSEP), 2061–2070 (KKPEMADFRQ), and 2165–2180 (TEEH…REQE). Residues 2326 to 2340 (PEPSLQEAESQSSSL) are compositionally biased toward low complexity.

Belongs to the G-protein coupled receptor 3 family. In terms of assembly, homodimer. Associates with the R7 group RGS-GNB5 complexes, composed of an R7 group RGS subunit (RGS6, RGS7, RGS9 or RGS11) and GNB5, promoting their localization to the cell membrane and regulating the GTPase activator activity of R7 RGS proteins. Interacts with TRPM1. Interacts with GRM6. Interacts with EGFLAM; transsynaptic interaction is required for synaptic organization of photoreceptor cells. Expressed in the retina.

It is found in the cell membrane. The protein resides in the postsynaptic cell membrane. The protein localises to the cell projection. Its subcellular location is the dendrite. In terms of biological role, orphan receptor involved in vision. Required for signal transduction through retinal depolarizing bipolar cells. Acts as an atypical G-protein coupled receptor that recruits and regulates the R7 group RGS-GNB5 complexes instead of activating G proteins: promotes the GTPase activator activity of R7 RGS proteins, increasing the GTPase activity of G protein alpha subunits, thereby driving them into their inactive GDP-bound form. Associates with components of metabotropic signaling cascade in retina ON-bipolar neurons, such as TRPM1 and GRM6: may control the ability of the GRM6 cascade to gate TRPM1. In Homo sapiens (Human), this protein is Probable G-protein coupled receptor 179.